The primary structure comprises 732 residues: Polyribonucleotide nucleotidyltransferase (732 aa).

Aspartate 503 and aspartate 509 together coordinate Mg(2+). The region spanning 570-629 (PRLTSIQIPVDAIGLIIGKGGETIRSITEETGAEINIEDDGTVTIACSSPEGTNAAVETI) is the KH domain. The S1 motif domain maps to 639-713 (GNTYLGKVRD…GKNRFALSIK (75 aa)). The disordered stretch occupies residues 710-732 (LSIKAVESEPEKSDENKAGTEGN). Positions 715 to 732 (VESEPEKSDENKAGTEGN) are enriched in basic and acidic residues.

This sequence belongs to the polyribonucleotide nucleotidyltransferase family. Requires Mg(2+) as cofactor.

It localises to the cytoplasm. It carries out the reaction RNA(n+1) + phosphate = RNA(n) + a ribonucleoside 5'-diphosphate. Functionally, involved in mRNA degradation. Catalyzes the phosphorolysis of single-stranded polyribonucleotides processively in the 3'- to 5'-direction. This chain is Polyribonucleotide nucleotidyltransferase, found in Chlorobium phaeobacteroides (strain DSM 266 / SMG 266 / 2430).